The chain runs to 640 residues: Protein UL35 (640 aa).

Disordered regions lie at residues 353–373 (ERGE…PREA), 500–571 (ASSS…PRQR), and 586–640 (AYSH…LRHL). Over residues 358-367 (GDEDEEQEND) the composition is skewed to acidic residues. Over residues 500-562 (ASSSSASSSS…LSGSHGISSA (63 aa)) the composition is skewed to low complexity. Positions 588 to 598 (SHHRRHRRRRS) are enriched in basic residues. Over residues 631-640 (DDLAENLRHL) the composition is skewed to basic and acidic residues.

It belongs to the herpesviridae pp85 family. As to quaternary structure, interacts with UL82. Interacts with isoform UL35A. Interacts with host UBP7; this interaction significantly inhibits the ability of USP7 to form nuclear bodies. Interacts with host DCAF1 (via C-terminus). Interacts with host SNX5; this interaction allows proper gB localization during viral assembly. Interacts with host TBK1; this interaction prevents type I interferon production. In terms of assembly, interacts with UL82. Interacts with isoform UL35. Interacts with host UBP7; this interaction significantly inhibits the ability of USP7 to form nuclear bodies. Interacts with host SNX5; this interaction allows proper gB localization during viral assembly.

It localises to the virion tegument. It is found in the host nucleus. The protein resides in the host cytoplasm. Functionally, plays important role in immediate-early gene expression through interaction with UL82. Forms nuclear bodies in host nucleus, independently of PML. In turn, UL35 nuclear bodies associate with and remodel PML bodies. Through interaction with host DCAF1, causes cells to accumulate in the G2 phase of the cell cycle by inducing a DNA damage response. Regulates viral assembly by controlling the localization of the essential gB through regulation of a retrograde transport pathway. This modulation occurs via binding and inhibition of host sorting nexin 5/SNX5. Also plays a role in the inhibition of pattern recognition receptor-mediated type I interferon signaling at the level of TBK1. Promotes cytoplasmic UL82 accumulation and inhibits UL35-containing nuclear bodies formation. Regulates viral assembly by controlling the localization of the essential gB through regulation of a retrograde transport pathway. This modulation occurs via binding and inhibition of host sorting nexin 5/SNX5. The sequence is that of Protein UL35 (UL35) from Homo sapiens (Human).